A 129-amino-acid chain; its full sequence is 8-oxo-dGTP diphosphatase (129 aa).

In terms of domain architecture, Nudix hydrolase spans 1 to 129; sequence MKKLQIAVGI…EPVIAKLKRL (129 aa). Residues R23, H28, and 34 to 37 each bind 8-oxo-dGTP; that span reads EFPG. Residues G37 and E57 each coordinate Mg(2+). The short motif at 38-59 is the Nudix box element; the sequence is GKIEMGETPEQAVVRELQEEVG. N119 provides a ligand contact to 8-oxo-dGTP.

The protein belongs to the Nudix hydrolase family. As to quaternary structure, monomer. Mg(2+) serves as cofactor.

It catalyses the reaction 8-oxo-dGTP + H2O = 8-oxo-dGMP + diphosphate + H(+). The catalysed reaction is 8-oxo-GTP + H2O = 8-oxo-GMP + diphosphate + H(+). The enzyme catalyses 8-oxo-dGDP + H2O = 8-oxo-dGMP + phosphate + H(+). It carries out the reaction 8-oxo-GDP + H2O = 8-oxo-GMP + phosphate + H(+). In terms of biological role, specifically hydrolyzes both 8-oxo-deoxyguanosine triphosphate (8-oxo-dGTP) and 8-oxo-guanosine triphosphate (8-oxo-GTP) to the related monophosphates, thereby cleaning up the nucleotide pools and preventing misincorporation of 8-oxoGua into DNA and RNA. It prevents replicational errors by removing an oxidatively damaged form of guanine (8-oxo-dGTP) from DNA and the nucleotide pool. 8-oxo-dGTP can be inserted opposite dA and dC residues of template DNA with almost equal efficiency thus leading to A.T to G.C transversions. MutT may also ensure transcriptional fidelity, removing 8-oxo-GTP from the ribonucleotide triphosphate pool. However, due to the lower efficiency of RNA polymerase 8-oxo-GTP incorporation, MutT is probably not a major contributor to transcriptional fidelity. It also hydrolyzes 8-oxo-dGDP and 8-oxo-GDP to their monophosphate form. In vitro, can also use dGTP, dGDP and other various nucleoside di- and triphosphates, with much lower efficiency. Works cooperatively with MutM and MutY to prevent accumulation in the DNA of oxidized guanine residues. This Escherichia coli (strain K12) protein is 8-oxo-dGTP diphosphatase.